The sequence spans 138 residues: Transcription antitermination protein NusB (138 aa).

This sequence belongs to the NusB family.

Its function is as follows. Involved in transcription antitermination. Required for transcription of ribosomal RNA (rRNA) genes. Binds specifically to the boxA antiterminator sequence of the ribosomal RNA (rrn) operons. This Yersinia enterocolitica serotype O:8 / biotype 1B (strain NCTC 13174 / 8081) protein is Transcription antitermination protein NusB.